We begin with the raw amino-acid sequence, 91 residues long: Mercuric transport protein periplasmic component (91 aa).

The first 19 residues, 1 to 19 (MKKLFASLAIAAVVAPVWA), serve as a signal peptide directing secretion. Positions 22 to 88 (QTVTLSVPGM…ATEDAGYPSS (67 aa)) constitute an HMA domain. Positions 33 and 36 each coordinate Hg(2+).

Belongs to the MerP family. Monomer.

Its subcellular location is the periplasm. Functionally, involved in mercury resistance. Acts as a mercury scavenger that specifically binds to a mercuric ion in the periplasm and probably passes it to the cytoplasmic mercuric reductase MerA via the mercuric transport protein MerT. The sequence is that of Mercuric transport protein periplasmic component from Serratia marcescens.